A 292-amino-acid chain; its full sequence is Transforming growth factor-beta receptor type 3-like protein (292 aa).

The first 16 residues, 1–16 (MLGTVLLLALLPGITT), serve as a signal peptide directing secretion. Positions 17-170 (LPSGPPAPPF…APAPLTPPPP (154 aa)) constitute a ZP; truncated domain. The Extracellular portion of the chain corresponds to 17–244 (LPSGPPAPPF…PAPAALEPAP (228 aa)). Cysteines 85 and 147 form a disulfide. The tract at residues 160–236 (RAPAPLTPPP…AVRPEPPAPA (77 aa)) is disordered. 2 stretches are compositionally biased toward pro residues: residues 164–175 (PLTPPPPPPPSR) and 213–222 (PRPPPRPPKS). A helical transmembrane segment spans residues 245 to 265 (VVALVLAAFVLGAALAAGLGL). The Cytoplasmic segment spans residues 266–292 (VCAHSAPHAPGPPARASPSGPQPRRSQ). A disordered region spans residues 273 to 292 (HAPGPPARASPSGPQPRRSQ). Low complexity predominate over residues 281 to 292 (ASPSGPQPRRSQ).

Post-translationally, glycosylated. As to expression, expressed in pituitary gland gonadotrope cells.

It is found in the cell membrane. Functionally, expressed in gonadotrope cells, acts as an inhibin B coreceptor and regulates follicle-stimulating hormone (FSH) levels and female fertility. This is Transforming growth factor-beta receptor type 3-like protein from Homo sapiens (Human).